Here is a 98-residue protein sequence, read N- to C-terminus: ESAT-6-like protein EsxK (98 aa).

The protein belongs to the WXG100 family. CFP-10 subfamily. Strongly interacts with EsxL to form a heterodimeric complex under reducing conditions. The complex is regulated by the redox state of EsxL.

The protein localises to the secreted. This chain is ESAT-6-like protein EsxK, found in Mycobacterium tuberculosis (strain ATCC 25618 / H37Rv).